Reading from the N-terminus, the 395-residue chain is Argininosuccinate synthase (395 aa).

7–15 contributes to the ATP binding site; it reads LYSGGLDTS. Residue Tyr-83 coordinates L-citrulline. Gly-113 is an ATP binding site. L-aspartate is bound by residues Thr-115, Asn-119, and Asp-120. Position 119 (Asn-119) interacts with L-citrulline. Arg-123, Ser-169, Ser-178, Glu-253, and Tyr-265 together coordinate L-citrulline.

The protein belongs to the argininosuccinate synthase family. Type 1 subfamily. In terms of assembly, homotetramer.

The protein localises to the cytoplasm. It catalyses the reaction L-citrulline + L-aspartate + ATP = 2-(N(omega)-L-arginino)succinate + AMP + diphosphate + H(+). It participates in amino-acid biosynthesis; L-arginine biosynthesis; L-arginine from L-ornithine and carbamoyl phosphate: step 2/3. The sequence is that of Argininosuccinate synthase from Picrophilus torridus (strain ATCC 700027 / DSM 9790 / JCM 10055 / NBRC 100828 / KAW 2/3).